Here is a 292-residue protein sequence, read N- to C-terminus: Small ribosomal subunit protein uS5 (292 aa).

Positions 1 to 56 (MADDAGAAGGPGGPGGPGMGGRGGFRGGFGSGIRGRGRGRGRGRGRGRGARGGKAE) are disordered. A2 is modified (N-acetylalanine). A compositionally biased stretch (gly residues) spans 7–34 (AAGGPGGPGGPGMGGRGGFRGGFGSGIR). A compositionally biased stretch (basic residues) spans 35 to 51 (GRGRGRGRGRGRGRGAR). Residues K54 and K58 each participate in a glycyl lysine isopeptide (Lys-Gly) (interchain with G-Cter in ubiquitin) cross-link. One can recognise an S5 DRBM domain in the interval 102–165 (LKDEVLKIMP…ILAKLSIVPV (64 aa)). Residue T251 is modified to Phosphothreonine. K262 is modified (N6-acetyllysine). Phosphoserine is present on S263. At T269 the chain carries Phosphothreonine. Residue K274 is modified to N6-acetyllysine; alternate. A Glycyl lysine isopeptide (Lys-Gly) (interchain with G-Cter in SUMO1); alternate cross-link involves residue K274. Residue K274 forms a Glycyl lysine isopeptide (Lys-Gly) (interchain with G-Cter in SUMO2); alternate linkage. A Glycyl lysine isopeptide (Lys-Gly) (interchain with G-Cter in ubiquitin); alternate cross-link involves residue K274. Phosphoserine is present on S280.

This sequence belongs to the universal ribosomal protein uS5 family. As to quaternary structure, component of the small ribosomal subunit. Interacts with zinc finger protein ZNF277 (via zinc-finger domains); the interaction is direct; the interaction is extra-ribosomal. Interaction with ZNF277 competes with the binding of RPS2 to protein arginine methyltransferase PRMT3. In terms of processing, citrullinated by PADI4 in the Arg/Gly-rich region. Post-translationally, asymmetric arginine dimethylation by PRMT3 occurs at multiple sites in the Arg/Gly-rich region. Monoubiquitinated at Lys-54 and Lys-58 by RNF10 when a ribosome has stalled during translation, leading to its degradation by the proteasome. Deubiquitinated at Lys-54 and Lys-58 by USP10, preventing degradation by the proteasome and promoting 40S ribosome subunit recycling following ribosome dissociation.

Its subcellular location is the cytoplasm. It localises to the nucleus. The protein localises to the nucleolus. Its function is as follows. Component of the ribosome, a large ribonucleoprotein complex responsible for the synthesis of proteins in the cell. The small ribosomal subunit (SSU) binds messenger RNAs (mRNAs) and translates the encoded message by selecting cognate aminoacyl-transfer RNA (tRNA) molecules. The large subunit (LSU) contains the ribosomal catalytic site termed the peptidyl transferase center (PTC), which catalyzes the formation of peptide bonds, thereby polymerizing the amino acids delivered by tRNAs into a polypeptide chain. The nascent polypeptides leave the ribosome through a tunnel in the LSU and interact with protein factors that function in enzymatic processing, targeting, and the membrane insertion of nascent chains at the exit of the ribosomal tunnel. Plays a role in the assembly and function of the 40S ribosomal subunit. In Oryctolagus cuniculus (Rabbit), this protein is Small ribosomal subunit protein uS5 (RPS2).